Here is a 326-residue protein sequence, read N- to C-terminus: Beta-ketoacyl-[acyl-carrier-protein] synthase III (326 aa).

Active-site residues include C111 and H252. Residues 253 to 257 (QANIR) are ACP-binding. N282 is an active-site residue.

This sequence belongs to the thiolase-like superfamily. FabH family. Homodimer.

It is found in the plastid. The protein resides in the chloroplast. It catalyses the reaction malonyl-[ACP] + acetyl-CoA + H(+) = 3-oxobutanoyl-[ACP] + CO2 + CoA. The protein operates within lipid metabolism; fatty acid biosynthesis. Its function is as follows. Catalyzes the condensation reaction of fatty acid synthesis by the addition to an acyl acceptor of two carbons from malonyl-ACP. Catalyzes the first condensation reaction which initiates fatty acid synthesis and may therefore play a role in governing the total rate of fatty acid production. Possesses both acetoacetyl-ACP synthase and acetyl transacylase activities. Its substrate specificity determines the biosynthesis of branched-chain and/or straight-chain of fatty acids. This Porphyra umbilicalis (Purple laver) protein is Beta-ketoacyl-[acyl-carrier-protein] synthase III.